Here is a 556-residue protein sequence, read N- to C-terminus: Formate--tetrahydrofolate ligase (556 aa).

Residue Thr65–Thr72 coordinates ATP.

The protein belongs to the formate--tetrahydrofolate ligase family.

It catalyses the reaction (6S)-5,6,7,8-tetrahydrofolate + formate + ATP = (6R)-10-formyltetrahydrofolate + ADP + phosphate. Its pathway is one-carbon metabolism; tetrahydrofolate interconversion. The polypeptide is Formate--tetrahydrofolate ligase (Ruminiclostridium cellulolyticum (strain ATCC 35319 / DSM 5812 / JCM 6584 / H10) (Clostridium cellulolyticum)).